The following is a 292-amino-acid chain: uncharacterized protein (292 aa).

It is found in the virion. This is an uncharacterized protein from Acanthamoeba polyphaga (Amoeba).